We begin with the raw amino-acid sequence, 115 residues long: Large ribosomal subunit protein bL19 (115 aa).

The protein belongs to the bacterial ribosomal protein bL19 family.

In terms of biological role, this protein is located at the 30S-50S ribosomal subunit interface and may play a role in the structure and function of the aminoacyl-tRNA binding site. In Streptococcus pyogenes serotype M1, this protein is Large ribosomal subunit protein bL19.